Consider the following 141-residue polypeptide: QVEGVVTLSQEDNGPTTVKVRLTGLTPGKHGFHLHEFGDTTNGCMSTGSHFNPKKLTHGAPEDDVRHAGDLGNIVAGSDGVAEATIVDNQIPLSGPDSVIGRALVVHELEDDLGKGGHELSLTTGNAGGRLACGVVGLTPI.

Residues histidine 33, histidine 35, and histidine 50 each coordinate Cu cation. The cysteines at positions 44 and 133 are disulfide-linked. 4 residues coordinate Zn(2+): histidine 50, histidine 58, histidine 67, and aspartate 70. Histidine 107 contributes to the Cu cation binding site.

The protein belongs to the Cu-Zn superoxide dismutase family. As to quaternary structure, homotetramer. Requires Cu cation as cofactor. Zn(2+) serves as cofactor.

It is found in the plastid. The protein localises to the chloroplast. The enzyme catalyses 2 superoxide + 2 H(+) = H2O2 + O2. Its function is as follows. Destroys radicals which are normally produced within the cells and which are toxic to biological systems. The protein is Superoxide dismutase [Cu-Zn], chloroplastic (SODCP) of Pinus sylvestris (Scotch pine).